The chain runs to 356 residues: PEP-dependent dihydroxyacetone kinase, dihydroxyacetone-binding subunit DhaK (356 aa).

A DhaK domain is found at 7 to 352 (DVQDVLDEQL…WDAPVHTPAL (346 aa)). Dihydroxyacetone contacts are provided by residues 53–56 (GSGH), Lys104, and Asp109. His56 acts as the Proton acceptor in catalysis. The active-site Tele-hemiaminal-histidine intermediate is the His218.

Homodimer. The dihydroxyacetone kinase complex is composed of a homodimer of DhaM, a homodimer of DhaK and the subunit DhaL. DhaL also forms a complex with DhaR.

The catalysed reaction is dihydroxyacetone + phosphoenolpyruvate = dihydroxyacetone phosphate + pyruvate. It participates in polyol metabolism; glycerol degradation. With respect to regulation, inhibited by chloro-3-hydroxyacetone and D,L-glyceraldehyde. Its function is as follows. Dihydroxyacetone binding subunit of the dihydroxyacetone kinase, which is responsible for the phosphoenolpyruvate (PEP)-dependent phosphorylation of dihydroxyacetone via a phosphoryl group transfer from DhaL-ATP. Binds covalently dihydroxyacetone in hemiaminal linkage. DhaK also acts as corepressor of the transcription activator DhaR by binding to the sensor domain of DhaR. In the presence of dihydroxyacetone, DhaL-ADP displaces DhaK and stimulates DhaR activity. In the absence of dihydroxyacetone, DhaL-ADP is converted by the PTS to DhaL-ATP, which does not bind to DhaR. The sequence is that of PEP-dependent dihydroxyacetone kinase, dihydroxyacetone-binding subunit DhaK from Escherichia coli (strain K12).